The following is a 311-amino-acid chain: Delta-1-pyrroline-5-carboxylate reductase kk1I (311 aa).

The first 31 residues, 1–31 (MTKRESNTLAVLGCGMVFLVSLLDLANRLLG), serve as a signal peptide directing secretion. A glycan (N-linked (GlcNAc...) asparagine) is linked at asparagine 59.

Belongs to the pyrroline-5-carboxylate reductase family.

Its pathway is secondary metabolite biosynthesis. Delta-1-pyrroline-5-carboxylate reductase; part of the gene cluster that mediates the biosynthesis of KK-1, a novel cyclic depsipeptide with 10 residues which is a promising active compound with high activity against many plant pathogens, especially Botrytis cinerea. Within the pathway, kk1I catalyzes the synthesis of the L-pipecolic acid residue of KK-1 from delta-1-pyrroline-5-carboxylate (P5C), a metabolic intermediate of lysine. The nonribosomal peptide synthetase (NRPS) kk1B catalyzes the elongation and cyclization of the decapeptide chain composed of 1 D-lactic acid residue (D-Lac), 1 pipecolic acid residue (Pip), 1 aspartic acid residue (Asp), 1 isoleucine residue (Ile), 1 glycine residue (Gly), 1 tyrosine residue (Tyr) and 4 valine residues (Val). The Asp, Ile and 3 Val residues are N-methylated by the 5 methyltransferase domains from the NRPS (found in modules 3, 5, 6, 7 and 9), whereas the Tyr residue is O-methylated by the cluster encoded O-methyltransferase kk1A. The thioesterase kk1J is likely to be involved in the corrective mechanism of peptide chain synthesis. The D-lactate dehydrogenase kk1H is involved in the synthesis of D-lactic acid from pyruvic acid, which is recognized by the A domain of the first kk1B module. The pyrroline-5-carboxylate reductase kk1I is involved in the synthesis of the L-pipecolic acid residue of KK-1 from delta-1-pyrroline-5-carboxylate (P5C), a metabolic intermediate of lysine. It still is unclear how kk1C and kk1D are involved in the production of KK-1. In Curvularia clavata, this protein is Delta-1-pyrroline-5-carboxylate reductase kk1I.